The primary structure comprises 368 residues: Seven-bladed beta-propeller protein MSMEG_5308 (368 aa).

In terms of assembly, interacts with MmpL3 and TtfA.

The protein localises to the cell septum. The protein resides in the cell tip. In terms of biological role, stabilizes the MmpL3/TtfA trehalose monomycolate (TMM) transport complex under stress conditions. This chain is Seven-bladed beta-propeller protein MSMEG_5308, found in Mycolicibacterium smegmatis (strain ATCC 700084 / mc(2)155) (Mycobacterium smegmatis).